The sequence spans 228 residues: MQKLKQQVFEANMDLPRYGLVTFTWGNVSAIDRERGLVVIKPSGVAYETMKADDMVVVDMSGKVVEGEYRPSSDTATHLELYRRYPSLGGIVHTHSTHATAWAQAGLAIPALGTTHADYFFGDIPYTRGLSEEEVQGEYELNTGKVIIETLGNAEPLHTPGIVVYQHGPFAWGKDAHDAVHNAVVMEEVAKMAWIARSINPQLNHIDSFLMNKHFMRKHGPNAYYGQK.

Substrate-binding positions include 26-27, 43-44, and 72-73; these read GN, SG, and SS. Zn(2+) is bound by residues D74, H93, and H95. Residue D118 is the Proton donor/acceptor of the active site. Residue H167 participates in Zn(2+) binding. Y225 serves as the catalytic Proton donor/acceptor.

Belongs to the aldolase class II family. AraD/FucA subfamily. The cofactor is Zn(2+).

It catalyses the reaction L-ribulose 5-phosphate = D-xylulose 5-phosphate. It participates in cofactor degradation; L-ascorbate degradation; D-xylulose 5-phosphate from L-ascorbate: step 4/4. Functionally, catalyzes the isomerization of L-ribulose 5-phosphate to D-xylulose 5-phosphate. Is involved in the anaerobic L-ascorbate utilization. The protein is L-ribulose-5-phosphate 4-epimerase UlaF of Escherichia coli O139:H28 (strain E24377A / ETEC).